The chain runs to 367 residues: Anthranilate phosphoribosyltransferase (367 aa).

5-phospho-alpha-D-ribose 1-diphosphate-binding positions include Gly105, 108 to 109 (GD), Thr113, 115 to 118 (NIST), 133 to 141 (KHGNRAASS), and Gly145. Gly105 serves as a coordination point for anthranilate. Ser117 is a Mg(2+) binding site. Asn136 contacts anthranilate. Arg191 contributes to the anthranilate binding site. The Mg(2+) site is built by Asp249 and Glu250.

It belongs to the anthranilate phosphoribosyltransferase family. As to quaternary structure, homodimer. Requires Mg(2+) as cofactor.

It carries out the reaction N-(5-phospho-beta-D-ribosyl)anthranilate + diphosphate = 5-phospho-alpha-D-ribose 1-diphosphate + anthranilate. It functions in the pathway amino-acid biosynthesis; L-tryptophan biosynthesis; L-tryptophan from chorismate: step 2/5. Its function is as follows. Catalyzes the transfer of the phosphoribosyl group of 5-phosphorylribose-1-pyrophosphate (PRPP) to anthranilate to yield N-(5'-phosphoribosyl)-anthranilate (PRA). The chain is Anthranilate phosphoribosyltransferase from Corynebacterium jeikeium (strain K411).